The chain runs to 86 residues: NAD(P)H-quinone oxidoreductase subunit O (86 aa).

Belongs to the complex I NdhO subunit family. As to quaternary structure, NDH-1 can be composed of about 15 different subunits; different subcomplexes with different compositions have been identified which probably have different functions.

It localises to the cellular thylakoid membrane. It carries out the reaction a plastoquinone + NADH + (n+1) H(+)(in) = a plastoquinol + NAD(+) + n H(+)(out). The catalysed reaction is a plastoquinone + NADPH + (n+1) H(+)(in) = a plastoquinol + NADP(+) + n H(+)(out). NDH-1 shuttles electrons from an unknown electron donor, via FMN and iron-sulfur (Fe-S) centers, to quinones in the respiratory and/or the photosynthetic chain. The immediate electron acceptor for the enzyme in this species is believed to be plastoquinone. Couples the redox reaction to proton translocation, and thus conserves the redox energy in a proton gradient. Cyanobacterial NDH-1 also plays a role in inorganic carbon-concentration. The chain is NAD(P)H-quinone oxidoreductase subunit O from Prochlorococcus marinus (strain SARG / CCMP1375 / SS120).